A 396-amino-acid polypeptide reads, in one-letter code: MMPRYCAAICCKNRRGRNNKDRKLSFYPFPLHDKERLEKWLKNMKRDSWVPSKYQFLCSDHFTPDSLDIRWGIRYLKQTAVPTIFSLPEDNQGKDPSKKKSQKKNLEDEKEVCPKAKSEESFVLNETKKNIVNTNVPPQHPELLHSSSLVKPPAPKTGSIQNNMLTVNLVKQHTGKPESTLETSVYQDTGIGDFHTCFEDLNSTTITLTTSNSESIHQSLETQDVLEVTTNHLANPDFTSNSMEIKSAQENPFLFSTINQTVEELNTSKESVIAIFVPAENSKPSVNSFISTQKETMEMEDIDIEDSLYKDVDYGTEVLQIEHSYCRQDINKEHLWQKVFKLHSKITLLELKEQQTLGRLKSLEALVRQLKQENWLSEENVKIIENHFTTYEVTMI.

Residues 2-85 form a THAP-type zinc finger; that stretch reads MPRYCAAICC…LKQTAVPTIF (84 aa). Residues 86–113 are disordered; sequence SLPEDNQGKDPSKKKSQKKNLEDEKEVC. Residues 91–113 are compositionally biased toward basic and acidic residues; it reads NQGKDPSKKKSQKKNLEDEKEVC. Positions 322-325 match the HCFC1-binding motif (HBM) motif; it reads EHSY. Positions 349–382 form a coiled coil; sequence LELKEQQTLGRLKSLEALVRQLKQENWLSEENVK.

In terms of assembly, interacts with HTRA2; under apoptotic conditions. Interacts with ABRAXAS2. Cleaved by HTRA2 during apoptosis.

The protein resides in the nucleus. Its function is as follows. Has sequence-specific DNA-binding activity and can function as transcriptional repressor (in vitro). May be a regulator of cell cycle: THAP5 overexpression in human cell lines causes cell cycle arrest at G2/M phase. The protein is THAP domain-containing protein 5 (THAP5) of Macaca fascicularis (Crab-eating macaque).